The primary structure comprises 557 residues: Formate--tetrahydrofolate ligase (557 aa).

65–72 (TPAGEGKT) contacts ATP.

This sequence belongs to the formate--tetrahydrofolate ligase family. In terms of assembly, homotetramer.

It carries out the reaction (6S)-5,6,7,8-tetrahydrofolate + formate + ATP = (6R)-10-formyltetrahydrofolate + ADP + phosphate. It participates in one-carbon metabolism; tetrahydrofolate interconversion. The polypeptide is Formate--tetrahydrofolate ligase (fhs) (Methylorubrum extorquens (strain ATCC 14718 / DSM 1338 / JCM 2805 / NCIMB 9133 / AM1) (Methylobacterium extorquens)).